Here is a 417-residue protein sequence, read N- to C-terminus: Peptidyl-Asp metalloendopeptidase (417 aa).

The signal sequence occupies residues 1–25 (MLSRSIGKAAGGLVLGLSVAAAAHA). Residue His327 participates in Zn(2+) binding. The active site involves Glu328. Residues His331 and His337 each contribute to the Zn(2+) site.

It belongs to the peptidase M72 family. Requires Zn(2+) as cofactor.

The catalysed reaction is Cleavage of Xaa-|-Asp, Xaa-|-Glu and Xaa-|-cysteic acid bonds.. Functionally, metalloprotease, specifically cleaves on the N-terminal side of aspartyl, glutamyl and cysteic acid residues. The polypeptide is Peptidyl-Asp metalloendopeptidase (Stenotrophomonas maltophilia (strain R551-3)).